Consider the following 177-residue polypeptide: Large ribosomal subunit protein bL19 (177 aa).

The protein belongs to the bacterial ribosomal protein bL19 family.

This protein is located at the 30S-50S ribosomal subunit interface and may play a role in the structure and function of the aminoacyl-tRNA binding site. The chain is Large ribosomal subunit protein bL19 from Sinorhizobium medicae (strain WSM419) (Ensifer medicae).